The following is a 327-amino-acid chain: Aliphatic sulfonates import ATP-binding protein SsuB (327 aa).

Residues 21-54 are disordered; sequence ELAQPRIADGDAQDAAVYERDGGAHAPPDGDRAD. Positions 37 to 54 are enriched in basic and acidic residues; the sequence is VYERDGGAHAPPDGDRAD. The ABC transporter domain maps to 66 to 285; the sequence is VRLTRVSKRY…ARASAAFAAL (220 aa). 98–105 provides a ligand contact to ATP; it reads GRSGCGKS. The disordered stretch occupies residues 300-327; that stretch reads APAAPNAAGPEGASRGRAAPASGLRWAV.

This sequence belongs to the ABC transporter superfamily. Aliphatic sulfonates importer (TC 3.A.1.17.2) family. In terms of assembly, the complex is composed of two ATP-binding proteins (SsuB), two transmembrane proteins (SsuC) and a solute-binding protein (SsuA).

The protein resides in the cell inner membrane. It catalyses the reaction ATP + H2O + aliphatic sulfonate-[sulfonate-binding protein]Side 1 = ADP + phosphate + aliphatic sulfonateSide 2 + [sulfonate-binding protein]Side 1.. In terms of biological role, part of the ABC transporter complex SsuABC involved in aliphatic sulfonates import. Responsible for energy coupling to the transport system. This Burkholderia pseudomallei (strain K96243) protein is Aliphatic sulfonates import ATP-binding protein SsuB.